We begin with the raw amino-acid sequence, 155 residues long: Small ribosomal subunit protein uS7c (155 aa).

It belongs to the universal ribosomal protein uS7 family. As to quaternary structure, part of the 30S ribosomal subunit.

It localises to the plastid. The protein localises to the chloroplast. One of the primary rRNA binding proteins, it binds directly to 16S rRNA where it nucleates assembly of the head domain of the 30S subunit. The protein is Small ribosomal subunit protein uS7c (rps7) of Aristolochia macrophylla (Dutchman's pipe vine).